Reading from the N-terminus, the 469-residue chain is Interstitial collagenase (469 aa).

A signal peptide spans 1–18 (MLSLPLLLLLLWGMGSHS). Positions 19 to 99 (FPTVPSETRE…PRCGVPDVAE (81 aa)) are cleaved as a propeptide — activation peptide. Positions 90–97 (PRCGVPDV) match the Cysteine switch motif. Cys92 lines the Zn(2+) pocket. Positions 124 and 158 each coordinate Ca(2+). Residues His168 and Asp170 each coordinate Zn(2+). Ca(2+) contacts are provided by Asp175, Gly176, Gly178, and Asn180. Position 183 (His183) interacts with Zn(2+). Ca(2+) contacts are provided by Arg190, Gly192, and Asp194. His196 is a Zn(2+) binding site. The Ca(2+) site is built by Asp198, Glu199, and Glu201. His218 contacts Zn(2+). Glu219 is an active-site residue. Zn(2+) contacts are provided by His222 and His228. At Thr274 the chain carries Phosphothreonine. Hemopexin repeat units follow at residues 275–324 (PEVC…WPQL), 325–371 (PNGL…FGFP), 374–422 (VKNI…FPGI), and 423–466 (GDKV…WFNC). Cys278 and Cys466 are disulfide-bonded. Asp285 and Gln329 together coordinate Ca(2+). Tyr360 is modified (phosphotyrosine; by PKDCC). Asp378 and Asp427 together coordinate Ca(2+).

It belongs to the peptidase M10A family. It depends on Ca(2+) as a cofactor. Requires Zn(2+) as cofactor. Tyrosine phosphorylated in platelets by PKDCC/VLK.

The protein localises to the secreted. It is found in the extracellular space. The protein resides in the extracellular matrix. The catalysed reaction is Cleavage of the triple helix of collagen at about three-quarters of the length of the molecule from the N-terminus, at 775-Gly-|-Ile-776 in the alpha1(I) chain. Cleaves synthetic substrates and alpha-macroglobulins at bonds where P1' is a hydrophobic residue.. With respect to regulation, can be activated without removal of the activation peptide. Its function is as follows. Cleaves collagens of types I, II, and III at one site in the helical domain. Also cleaves collagens of types VII and X. The protein is Interstitial collagenase (MMP1) of Equus caballus (Horse).